We begin with the raw amino-acid sequence, 189 residues long: Cytochrome b6-f complex subunit 4 (189 aa).

3 helical membrane passes run 36 to 56 (LSYI…GLAV), 103 to 123 (LLGV…PFLE), and 139 to 159 (TVSL…ALPI).

The protein belongs to the cytochrome b family. PetD subfamily. In terms of assembly, the 4 large subunits of the cytochrome b6-f complex are cytochrome b6, subunit IV (17 kDa polypeptide, petD), cytochrome f and the Rieske protein, while the 4 small subunits are petG, petL, petM and petN. The complex functions as a dimer.

The protein localises to the plastid. Its subcellular location is the chloroplast thylakoid membrane. Functionally, component of the cytochrome b6-f complex, which mediates electron transfer between photosystem II (PSII) and photosystem I (PSI), cyclic electron flow around PSI, and state transitions. The sequence is that of Cytochrome b6-f complex subunit 4 from Pinus koraiensis (Korean pine).